The sequence spans 348 residues: GTPase Obg 1 (348 aa).

Residues M1 to V159 enclose the Obg domain. The region spanning S160–V329 is the OBG-type G domain. GTP is bound by residues G166–S173, F191–E195, D212–G215, N279–D282, and G310–E312. Mg(2+) contacts are provided by S173 and T193.

It belongs to the TRAFAC class OBG-HflX-like GTPase superfamily. OBG GTPase family. In terms of assembly, monomer. It depends on Mg(2+) as a cofactor.

It is found in the cytoplasm. In terms of biological role, an essential GTPase which binds GTP, GDP and possibly (p)ppGpp with moderate affinity, with high nucleotide exchange rates and a fairly low GTP hydrolysis rate. Plays a role in control of the cell cycle, stress response, ribosome biogenesis and in those bacteria that undergo differentiation, in morphogenesis control. The chain is GTPase Obg 1 from Anaplasma marginale (strain St. Maries).